The sequence spans 211 residues: Dephospho-CoA kinase (211 aa).

The region spanning 3-206 (VIGLTGGIAT…GGRGRRLPNA (204 aa)) is the DPCK domain. An ATP-binding site is contributed by 11 to 16 (ATGKST).

It belongs to the CoaE family.

It is found in the cytoplasm. It carries out the reaction 3'-dephospho-CoA + ATP = ADP + CoA + H(+). The protein operates within cofactor biosynthesis; coenzyme A biosynthesis; CoA from (R)-pantothenate: step 5/5. In terms of biological role, catalyzes the phosphorylation of the 3'-hydroxyl group of dephosphocoenzyme A to form coenzyme A. The polypeptide is Dephospho-CoA kinase (Anaeromyxobacter dehalogenans (strain 2CP-C)).